The chain runs to 537 residues: Phosphoenolpyruvate carboxykinase (ATP) (537 aa).

Residues Arg64, Tyr204, and Lys210 each contribute to the substrate site. Residues Lys210, His229, and 245 to 253 contribute to the ATP site; that span reads GLSGTGKTT. Residues Lys210 and His229 each contribute to the Mn(2+) site. Asp266 provides a ligand contact to Mn(2+). ATP is bound by residues Glu294, Arg330, 446–447, and Thr452; that span reads RI. Arg330 provides a ligand contact to substrate.

It belongs to the phosphoenolpyruvate carboxykinase (ATP) family. As to quaternary structure, monomer. Requires Mn(2+) as cofactor.

It localises to the cytoplasm. The enzyme catalyses oxaloacetate + ATP = phosphoenolpyruvate + ADP + CO2. It functions in the pathway carbohydrate biosynthesis; gluconeogenesis. In terms of biological role, involved in the gluconeogenesis. Catalyzes the conversion of oxaloacetate (OAA) to phosphoenolpyruvate (PEP) through direct phosphoryl transfer between the nucleoside triphosphate and OAA. The chain is Phosphoenolpyruvate carboxykinase (ATP) from Aliivibrio fischeri (strain ATCC 700601 / ES114) (Vibrio fischeri).